We begin with the raw amino-acid sequence, 151 residues long: Transcriptional repressor NrdR (151 aa).

A zinc finger lies at 3–34 (CPFCNSVDTSVKNSRPSDCKMSVRRRRSCDSC). The ATP-cone domain occupies 49–139 (VKVLKKDGSV…VYMNFSDVND (91 aa)).

Belongs to the NrdR family. The cofactor is Zn(2+).

Functionally, negatively regulates transcription of bacterial ribonucleotide reductase nrd genes and operons by binding to NrdR-boxes. This is Transcriptional repressor NrdR from Anaplasma marginale (strain Florida).